A 322-amino-acid polypeptide reads, in one-letter code: Mycothiol acetyltransferase (322 aa).

N-acetyltransferase domains follow at residues 5–150 and 160–322; these read SWLR…DPDD and VTIR…PARG. Position 36 (Glu36) interacts with 1D-myo-inositol 2-(L-cysteinylamino)-2-deoxy-alpha-D-glucopyranoside. Residues 79-81 and 87-92 each bind acetyl-CoA; these read LVV and RRGVGT. 3 residues coordinate 1D-myo-inositol 2-(L-cysteinylamino)-2-deoxy-alpha-D-glucopyranoside: Glu187, Lys226, and Glu252. 256 to 258 serves as a coordination point for acetyl-CoA; the sequence is VGV. Tyr290 is a 1D-myo-inositol 2-(L-cysteinylamino)-2-deoxy-alpha-D-glucopyranoside binding site. 295–300 is an acetyl-CoA binding site; sequence NARAVR.

The protein belongs to the acetyltransferase family. MshD subfamily. Monomer.

The enzyme catalyses 1D-myo-inositol 2-(L-cysteinylamino)-2-deoxy-alpha-D-glucopyranoside + acetyl-CoA = mycothiol + CoA + H(+). Functionally, catalyzes the transfer of acetyl from acetyl-CoA to desacetylmycothiol (Cys-GlcN-Ins) to form mycothiol. The protein is Mycothiol acetyltransferase of Parafrankia sp. (strain EAN1pec).